Reading from the N-terminus, the 183-residue chain is Tetrahydromethanopterin S-methyltransferase subunit A 2 (183 aa).

The Cytoplasmic segment spans residues 1–101 (MFLMVEKKPV…TMKALHSNGV (101 aa)). Position 87 (H87) interacts with 5-hydroxybenzimidazolylcob(I)amide. The chain crosses the membrane as a helical span at residues 102–118 (DLETGRIIGATGAIPYI). Over 119–183 (ENMPEEAIER…IGKGDSEENT (65 aa)) the chain is Extracellular.

The protein belongs to the MtrA family. As to quaternary structure, the complex is composed of 8 subunits; MtrA, MtrB, MtrC, MtrD, MtrE, MtrF, MtrG and MtrH. 5-hydroxybenzimidazolylcob(I)amide serves as cofactor.

Its subcellular location is the cell membrane. The catalysed reaction is 5-methyl-5,6,7,8-tetrahydromethanopterin + coenzyme M + 2 Na(+)(in) = 5,6,7,8-tetrahydromethanopterin + methyl-coenzyme M + 2 Na(+)(out). It functions in the pathway one-carbon metabolism; methanogenesis from CO(2); methyl-coenzyme M from 5,10-methylene-5,6,7,8-tetrahydromethanopterin: step 2/2. Functionally, part of a complex that catalyzes the formation of methyl-coenzyme M and tetrahydromethanopterin from coenzyme M and methyl-tetrahydromethanopterin. This is an energy-conserving, sodium-ion translocating step. The polypeptide is Tetrahydromethanopterin S-methyltransferase subunit A 2 (Methanothermobacter thermautotrophicus (strain ATCC 29096 / DSM 1053 / JCM 10044 / NBRC 100330 / Delta H) (Methanobacterium thermoautotrophicum)).